The primary structure comprises 265 residues: Phosphonates import ATP-binding protein PhnC 1 (265 aa).

Residues 3–247 enclose the ABC transporter domain; sequence LRLSAIDLRH…HLDTLYANEQ (245 aa). 36–43 contributes to the ATP binding site; the sequence is GPSGAGKT.

The protein belongs to the ABC transporter superfamily. Phosphonates importer (TC 3.A.1.9.1) family. In terms of assembly, the complex is composed of two ATP-binding proteins (PhnC), two transmembrane proteins (PhnE) and a solute-binding protein (PhnD).

The protein resides in the cell inner membrane. The enzyme catalyses phosphonate(out) + ATP + H2O = phosphonate(in) + ADP + phosphate + H(+). Its function is as follows. Part of the ABC transporter complex PhnCDE involved in phosphonates import. Responsible for energy coupling to the transport system. This Pseudomonas syringae pv. tomato (strain ATCC BAA-871 / DC3000) protein is Phosphonates import ATP-binding protein PhnC 1.